A 554-amino-acid chain; its full sequence is Macrophage colony-stimulating factor 1 (554 aa).

A signal peptide spans 1-32 (MTAPGAAGRCPPTTWLGSLLLLVCLLASRSIT). The Lumenal segment spans residues 33 to 496 (EEVSEYCSHM…GSFSPQLQES (464 aa)). Disulfide bonds link Cys39-Cys122, Cys80-Cys171, and Cys134-Cys178. 2 N-linked (GlcNAc...) asparagine glycosylation sites follow: Asn154 and Asn172. Residues 224 to 488 (EDSEGTEGSS…TGHERQSEGS (265 aa)) form a disordered region. Residue Thr266 is modified to Phosphothreonine; by FAM20C. The O-linked (Xyl...) (chondroitin sulfate) serine glycan is linked to Ser309. A compositionally biased stretch (low complexity) spans 344–354 (LSASSPLPASA). O-linked (GalNAc...) threonine glycosylation is found at Thr363 and Thr365. Residues 404 to 433 (RISSLRPQGLSNPSTLSAQPQLSRSHSSGS) show a composition bias toward polar residues. An O-glycosylated at one site region spans residues 406–426 (SSLRPQGLSNPSTLSAQPQLS). Residues 440-453 (LEGRRSTRDRRSPA) show a composition bias toward basic and acidic residues. Residues 497 to 517 (VFHLLVPSVILVLLAVGGLLF) traverse the membrane as a helical segment. The Cytoplasmic portion of the chain corresponds to 518 to 554 (YRWRRRSHQEPQRADSPLEQPEGSPLTQDDRQVELPV). The tract at residues 526–554 (QEPQRADSPLEQPEGSPLTQDDRQVELPV) is disordered. A compositionally biased stretch (basic and acidic residues) spans 545–554 (QDDRQVELPV).

As to quaternary structure, homodimer or heterodimer; disulfide-linked. Likely to exist in multiple forms: homodimer consisting of 2 identical 150-200 kDa proteoglycan subunits, heterodimer consisting of a 150-200 kDa proteoglycan subunit and a truncated 43 kDa subunit, and homodimer consisting of 2 identical 43 kDa subunits. Interacts with CSF1R. In terms of processing, N-glycosylated. O-glycosylated; contains chondroitin sulfate. O-glycosylated with core 1 or possibly core 8 glycans. Post-translationally, O-glycosylated.

It localises to the cell membrane. It is found in the secreted. The protein localises to the extracellular space. Cytokine that plays an essential role in the regulation of survival, proliferation and differentiation of hematopoietic precursor cells, especially mononuclear phagocytes, such as macrophages and monocytes. Promotes the release of pro-inflammatory chemokines, and thereby plays an important role in innate immunity and in inflammatory processes. Plays an important role in the regulation of osteoclast proliferation and differentiation, the regulation of bone resorption, and is required for normal bone development. Required for normal male and female fertility. Promotes reorganization of the actin cytoskeleton, regulates formation of membrane ruffles, cell adhesion and cell migration. Plays a role in lipoprotein clearance. This Homo sapiens (Human) protein is Macrophage colony-stimulating factor 1 (CSF1).